The following is a 265-amino-acid chain: Gamma-secretase subunit APH-1A (265 aa).

Residues Met-1–Gly-2 lie on the Lumenal side of the membrane. A helical transmembrane segment spans residues Ala-3–Ile-23. At Thr-24–Arg-31 the chain is on the cytoplasmic side. The chain crosses the membrane as a helical span at residues Val-32–Val-52. Residues Trp-53–Gln-68 lie on the Lumenal side of the membrane. A helical transmembrane segment spans residues Tyr-69–Ala-89. At Tyr-90–Ala-118 the chain is on the cytoplasmic side. Residues Tyr-119–Ala-139 traverse the membrane as a helical segment. The Lumenal portion of the chain corresponds to Asp-140–Leu-158. A helical membrane pass occupies residues Thr-159–Phe-179. The Cytoplasmic portion of the chain corresponds to Asp-180 to Arg-186. The chain crosses the membrane as a helical span at residues Tyr-187–Asn-207. Residues Pro-208–Ser-213 lie on the Lumenal side of the membrane. Residues Leu-214 to Gly-234 form a helical membrane-spanning segment. Residues Ser-235–Asp-265 lie on the Cytoplasmic side of the membrane.

Belongs to the APH-1 family. In terms of assembly, the functional gamma-secretase complex is composed of at least four polypeptides: a presenilin homodimer (PSEN1 or PSEN2), nicastrin (NCSTN), APH1 (APH1A or APH1B) and PSENEN/PEN2. Widely expressed. Expressed in leukocytes, lung, placenta, small intestine, liver, kidney, spleen thymus, skeletal muscle, heart and brain. Isoform 1 and isoform 2 are nearly expressed at the same level.

Its subcellular location is the endoplasmic reticulum membrane. It localises to the golgi apparatus. It is found in the golgi stack membrane. Functionally, non-catalytic subunit of the gamma-secretase complex, an endoprotease complex that catalyzes the intramembrane cleavage of integral membrane proteins such as Notch receptors and APP (amyloid-beta precursor protein). Required for normal gamma-secretase assembly. The gamma-secretase complex plays a role in Notch and Wnt signaling cascades and regulation of downstream processes via its role in processing key regulatory proteins, and by regulating cytosolic CTNNB1 levels. The protein is Gamma-secretase subunit APH-1A (APH1A) of Homo sapiens (Human).